The chain runs to 156 residues: Small ribosomal subunit protein uS7 (156 aa).

The protein belongs to the universal ribosomal protein uS7 family. In terms of assembly, part of the 30S ribosomal subunit. Contacts proteins S9 and S11.

One of the primary rRNA binding proteins, it binds directly to 16S rRNA where it nucleates assembly of the head domain of the 30S subunit. Is located at the subunit interface close to the decoding center, probably blocks exit of the E-site tRNA. This is Small ribosomal subunit protein uS7 from Pseudomonas entomophila (strain L48).